Reading from the N-terminus, the 181-residue chain is Large ribosomal subunit protein uL5c (181 aa).

This sequence belongs to the universal ribosomal protein uL5 family. In terms of assembly, part of the 50S ribosomal subunit; contacts the 5S rRNA.

It localises to the plastid. It is found in the chloroplast. Its function is as follows. Binds 5S rRNA, forms part of the central protuberance of the 50S subunit. This is Large ribosomal subunit protein uL5c (rpl5) from Heterosigma akashiwo (strain NIES-293 / 8280G21-1).